Consider the following 315-residue polypeptide: Vomeronasal type-1 receptor 54 (315 aa).

Residues M1 to N15 are Extracellular-facing. A helical transmembrane segment spans residues A16 to I40. Residues R41 to P51 are Cytoplasmic-facing. A helical membrane pass occupies residues I52–T71. Over D72–S90 the chain is Extracellular. Cysteines 85 and 172 form a disulfide. The chain crosses the membrane as a helical span at residues L91–V112. The Cytoplasmic portion of the chain corresponds to T113–M132. Residues L133–I154 form a helical membrane-spanning segment. Topologically, residues T155–D193 are extracellular. Residues V194–G212 form a helical membrane-spanning segment. Residues R213 to T239 are Cytoplasmic-facing. Residues I240 to I260 form a helical membrane-spanning segment. Residues R261–Q267 lie on the Extracellular side of the membrane. The helical transmembrane segment at I268–I288 threads the bilayer. Topologically, residues L289 to R315 are cytoplasmic.

The protein belongs to the G-protein coupled receptor 1 family.

It is found in the cell membrane. Putative pheromone receptor implicated in the regulation of social and reproductive behavior. The protein is Vomeronasal type-1 receptor 54 (Vmn1r54) of Mus musculus (Mouse).